Reading from the N-terminus, the 378-residue chain is MAWPCVTRACCIARFGNLQDKGDIAVPLMYSKYSEVTDGAQPPPPRPGSAAIETQPSLSDPYSGSLGRFSKKPESARGSVMRQDYQAWKANPEPSCKPRIEYQPSEAPLERETQYKKDFRSWPIPRQGDHPWIPKLSPSPTMPVIASDDKRKKDFVAPKAPPAEIKLINAEQPESAKGRGPTAFIAAPEILISVVQETNEIQKRESFMPKLPAKEPRATRDTGSPHPAQARGERGAGTSYRNEFRPWTDVKPVKPIKAKSQYQPPEEKVVHETSYKATFKGESNQPAAGDNKLMERRRIRSLYSEPSKESSKVEKPSVQTSKPKKTSTSHKPVKKAKEKIMASGRASKKKGAESSSTTKPEEKEKSKEINNKLAEAKE.

The tract at residues 36 to 111 is disordered; that stretch reads VTDGAQPPPP…YQPSEAPLER (76 aa). Residues 52 to 62 are compositionally biased toward polar residues; it reads IETQPSLSDPY. Mn stretches follow at residues 79 to 99 and 112 to 135; these read SVMRQDYQAWKANPEPSCKPR and ETQYKKDFRSWPIPRQGDHPWIPK. 4 stretches are compositionally biased toward basic and acidic residues: residues 203–220, 242–252, 265–274, and 306–315; these read KRESFMPKLPAKEPRATR, NEFRPWTDVKP, PEEKVVHETS, and PSKESSKVEK. The disordered stretch occupies residues 203–378; that stretch reads KRESFMPKLP…INNKLAEAKE (176 aa). The tract at residues 237–260 is mn 3; sequence GTSYRNEFRPWTDVKPVKPIKAKS. A compositionally biased stretch (basic residues) spans 322–337; that stretch reads KPKKTSTSHKPVKKAK. The span at 359–378 shows a compositional bias: basic and acidic residues; sequence KPEEKEKSKEINNKLAEAKE.

It belongs to the STOP family.

The protein localises to the cytoplasm. It is found in the cytoskeleton. In terms of biological role, involved in microtubule stabilization in many cell types, including neuronal cells. Specifically has microtubule cold stabilizing activity. Involved in dendrite morphogenesis and maintenance by regulating lysosomal trafficking. This Xenopus tropicalis (Western clawed frog) protein is Microtubule-associated protein 6 homolog (map6).